We begin with the raw amino-acid sequence, 587 residues long: Kelch-like ECH-associated protein 1B (587 aa).

The BTB domain occupies 44 to 117 (CDVTLRVRYC…AYTASISVGE (74 aa)). A BACK domain is found at 153 to 253 (IGIASFAEQI…LTPHFLQRQL (101 aa)). Kelch repeat units follow at residues 292 to 337 (LIYT…VISG), 338 to 388 (LLYA…VIDG), 389 to 435 (MIYA…VINR), 436 to 482 (LLYA…ALGN), 484 to 529 (IYVM…THHG), and 530 to 576 (RIYV…VTME).

Belongs to the KEAP1 family. As to quaternary structure, homodimer and heterodimer; heterodimerizes with keap1a. Component of the BCR(KEAP1) E3 ubiquitin ligase complex, at least composed of 2 molecules of cul3, 2 molecules of keap1 (keap1a and/or keap1b), and rbx1. Interacts with nfe2l2/nrf2; the interaction is direct. In terms of processing, non-enzymatic covalent modifications of reactive cysteines by electrophile metabolites inactivate the BCR(KEAP1) complex. As to expression, widely expressed.

It localises to the cytoplasm. The protein resides in the nucleus. The protein operates within protein modification; protein ubiquitination. Ubiquitin ligase activity of the BCR(KEAP1) complex is inhibited by oxidative stress and electrophile metabolites such as sulforaphane. Electrophile metabolites react with reactive cysteine residues in keap1 and trigger non-enzymatic covalent modifications of these cysteine residues, leading to inactivate the ubiquitin ligase activity of the BCR(KEAP1) complex. Its function is as follows. Substrate-specific adapter of a BCR (BTB-CUL3-RBX1) E3 ubiquitin ligase complex that regulates the response to oxidative stress by targeting nfe2l2/nrf2 for ubiquitination. Keap1 acts as a key sensor of oxidative and electrophilic stress: in normal conditions, the BCR(KEAP1) complex mediates ubiquitination and degradation of nfe2l2/nrf2, a transcription factor regulating expression of many cytoprotective genes. In response to oxidative stress, different electrophile metabolites trigger non-enzymatic covalent modifications of highly reactive cysteine residues in KEAP1, leading to inactivate the ubiquitin ligase activity of the BCR(KEAP1) complex, promoting nfe2l2/nrf2 nuclear accumulation and expression of phase II detoxifying enzymes. The chain is Kelch-like ECH-associated protein 1B from Danio rerio (Zebrafish).